The following is a 513-amino-acid chain: Mannan endo-1,4-beta-mannosidase A and B (513 aa).

A signal peptide spans 1–26 (MKVYKKVAFVMAFIMFFSVLPTISMS). Positions 41-353 (QTTKNVYSWL…FNDSWVVNRG (313 aa)) constitute a GH26 domain. His132 is a substrate binding site. Catalysis depends on Glu195, which acts as the Proton donor. Trp200 and Tyr270 together coordinate substrate. Glu295 functions as the Nucleophile in the catalytic mechanism. 429-430 (IK) is a binding site for substrate.

This sequence belongs to the glycosyl hydrolase 26 family.

Its subcellular location is the secreted. It catalyses the reaction Random hydrolysis of (1-&gt;4)-beta-D-mannosidic linkages in mannans, galactomannans and glucomannans.. Functionally, could be involved in the degradation of glucomannan and catalyzes the endo hydrolysis of beta-1,4-linked mannan, galactomannan and glucomannan. This chain is Mannan endo-1,4-beta-mannosidase A and B, found in Caldalkalibacillus mannanilyticus (strain DSM 16130 / CIP 109019 / JCM 10596 / AM-001) (Bacillus mannanilyticus).